A 128-amino-acid polypeptide reads, in one-letter code: Small ribosomal subunit protein uS9 (128 aa).

A disordered region spans residues 106-128 (SRKVERKKPGRPKARKKFQFSKR). Over residues 109 to 128 (VERKKPGRPKARKKFQFSKR) the composition is skewed to basic residues.

This sequence belongs to the universal ribosomal protein uS9 family.

The chain is Small ribosomal subunit protein uS9 from Azobacteroides pseudotrichonymphae genomovar. CFP2.